Consider the following 283-residue polypeptide: Thymidylate synthase (283 aa).

Arginine 22 is a binding site for dUMP. The Nucleophile role is filled by cysteine 160. DUMP is bound by residues 180 to 183, asparagine 191, and 221 to 223; these read RSCD and HIY. Aspartate 183 is a binding site for (6R)-5,10-methylene-5,6,7,8-tetrahydrofolate. Serine 282 contacts (6R)-5,10-methylene-5,6,7,8-tetrahydrofolate.

This sequence belongs to the thymidylate synthase family. Bacterial-type ThyA subfamily. In terms of assembly, homodimer.

It localises to the cytoplasm. The enzyme catalyses dUMP + (6R)-5,10-methylene-5,6,7,8-tetrahydrofolate = 7,8-dihydrofolate + dTMP. The protein operates within pyrimidine metabolism; dTTP biosynthesis. Its function is as follows. Catalyzes the reductive methylation of 2'-deoxyuridine-5'-monophosphate (dUMP) to 2'-deoxythymidine-5'-monophosphate (dTMP) while utilizing 5,10-methylenetetrahydrofolate (mTHF) as the methyl donor and reductant in the reaction, yielding dihydrofolate (DHF) as a by-product. This enzymatic reaction provides an intracellular de novo source of dTMP, an essential precursor for DNA biosynthesis. This chain is Thymidylate synthase, found in Vibrio vulnificus (strain CMCP6).